The following is a 372-amino-acid chain: Segmentation polarity homeobox protein engrailed (372 aa).

4 disordered regions span residues 1–35, 47–112, 196–246, and 261–286; these read MAFEDRCSPSQANSPGPVTGRVPAPHAETLAYSPQ, YERG…LQPT, ERLS…QSNP, and DRPSSGPRSRRVKKKAAPEEKRPRTA. Composition is skewed to basic and acidic residues over residues 79–105 and 197–215; these read DYYRPETPDVKPHFSREEQRFELDRSR and RLSRDREPPKSLEQQKRPD. Positions 216–244 are enriched in low complexity; the sequence is SASSIVSSTSSGAVSTCGSSDASSIQSQS. Residues 280 to 339 constitute a DNA-binding region (homeobox); it reads EKRPRTAFSGAQLARLKHEFAENRYLTERRRQSLAAELGLAEAQIKIWFQNKRAKIKKAS.

Belongs to the engrailed homeobox family. Expressed in the middle silk gland but not in the posterior silk gland during the fourth molt/fifth intermolt period.

It is found in the nucleus. This protein might be involved in the compartmentalization of the silk gland. The polypeptide is Segmentation polarity homeobox protein engrailed (en) (Bombyx mori (Silk moth)).